We begin with the raw amino-acid sequence, 5121 residues long: MTSRRLEESMGAVQMGLVNMFKGFQSKVLPPLSPKVVTEEEVNRMLTPSEFLKEMSLTTEQRLAKTRLMCRPQIIELLDMGETTHQKFSGIDLDQALFQPFPSEIIFQNYTPCEVYEVPLILRNNDKIPRLVKVVEESSPYFKVISPKDIGHKVAPGVPSIFRILFTPEENKDYAHTLTCVTEREKFIVPIKARGARAILDFPDKLNFSTCPVKYSTQKILLVRNIGNKNAVFHIKTCRPFSIEPAIGTLNVGESMQLEVEFEPQSVGDHSGRLIVCYDTGEKVFVSLYGAAIDMNIRLDKNSLTIEKTYISLANQRTITIHNRSNIIAHFLWKVFATQQEEDREKYRACDDLIKEEKDETDEFFEECITDPLLREHLSVLSRTFANQRRLVQGDSKLFFNNVFTVEPLEGDVWPNSSAEITVYFNPLEAKLYQQTIYCDILGREIRLPLRIKGEGMGPKIHFNFELLDIGKVFTGSAHCYEAILYNKGSIDALFNMTPPTSALGACFVFSPKEGIIEPSGVQAIQISFSSTILGNFEEEFLVNVNGSPEPVKLTIRGCVIGPTFHFNVPALHFGDVSFGFPHTLICSLNNTSLIPMTYKLRIPGDGLGHKSISYCEQHVDYKRPSWTKEEISSMKPKEFTISPDCGTIRPQGFAAIRVTLCSNTVQKYELALVVDVEGIGEEVLALLITARCVVPALHLVNTEVDFGHCFLKYPYEKTLQLANQDDLPGFYEVQPQVCEEVPTVLFSSPTPSGVISPSSTIHIPLVLETQVTGEHRSTVYISIFGSQDPPLVCHLKSAGEGPVIYVHPNQVDFGNIYVLKDSSRILNLCNQSFIPAFFQAHMAHKKSLWTIEPNEGMVPPETDVQLALTANLNDTLTFKDCVILDIENSSTYRIPVQASGTGSTIVSDKPFAPELNLGAHFSLDTHYYHFKLINKGRRIQQLFWMNDSFRPQAKLSKKGRVKKGHAHVQPQPSGSQEPRDPQSPVFHLHPASMELYPGQAIDVILEGYSATPRIVKEKLVCHAIIGAQKGKSLVMAVNITCEFVAPLIQLSTKQLIYRLEKKPNSILKPDYQPLAIKNISTLPVNLLLSTSGPFFICETDKSLLPATPEPIKLEIDEEKNLLIKFDPSYRNDLNNWVAEEILAIKYVEHPQIDSLDLRGEVHYPNLSFETKELDFGCILNDTELIRYVTITNCSPLVVKFRWFFLVNDEENQIRFVTLPKKPYSAPVSQMESIPATSEAASPPAILVTVESPEMDLNDFVKTVLVDEDARPEEKELRKTKASSVISDEIKISSTEIERIYSSQSQVEDQESLQTCEQNEMLSIGIEEVFDILPLFGVLQPHSSHQISFTFYGHANIIAQAKALCEVEEGPTYEITLKGEASLVNYSFDTKDIHYGLQLFDHVTEREITLTNMGKVGFEFKVLTDHQSSPDNLLPGVPLILPVSGFISSHQEQVLKVYYLPGVPEVFKRSFQIQIAHLDPENITLSGEGIFPQICLDLPRNLTANEKYEMFLNQARKNTDKEYNKCEMLDHFDIITEEVPEDEPAEVSAHLQMEVERLIVQSYVLEHQKTTTPDPMDDPCFSHRSRRKLAKIQLPEYILDFGYIILGEVRTHIIKIINTSHFPVSFHADKRVLHETGFSTELDRVKNLPHCETEIFEVRFDPQGANLPVGSKEVILPIKVVGGPTVHICLQAKVTIPTMTLSRGKVDFATIQCGQCLVETIQLSNHLQVPCEWFVQSQKPVDKLEKHMPKYLRQKLRAELKPKTRIFEIQPISGVLDPGEKSNVQVKFMPKEEKFYSQTLVFQIAQSAQKLTLLARGQGLEPRLEFSPSVLDLGPLLLCAPGDEAEVIVKNPCNFPIEFYSLEFDQQYLIEEKILRKLKGYDSYNTLLLPPRNPGEKLPPELYEYFKEIKKSKEEQMRAKYLENLAQENEEEDITSSDQGTSNSTKRTSLSRGISVTSNLEEWHALLVESKTYLEEEEDEESLEKIIFQTDKLQSIDSHSMEEVGEVENNPVSKAIARHLGIDISAEGRLAKNRKGIAIIIHGTPLSGKSANAVSVAKYYNAACLSIDSIVLEAVANSNNIPGIRARELCIRAAIEQSVKEGEEAAQEAAVGQNVIGQGRLSTDTLGKLASEMTLVAPEIKPGKSVRGSVVITKSKADSHGSGSQKQHHSHQSETPQISSSPLPPGPIHRWLSVSPSVGGETGLMSCVLPDELLVQILAERIQLSDCYRGVVFDGLDTLFAQNAAAALLCLLKAIGSREHIYILNMAQDYAAMKAQEKAKKEQEERKHKGALEKEKERLQNMDEEEYDALTEEEKLTFDRGIQQALRERKKREQERLAKEMQEKKLQQELERQKEEDELKRRVKKGKQGPIKEEPPMKKSQAANKQVPPLTKVDVKMETIERKISVREQTMSEKEELNKKKRNMGDVSMHGLPLVQDQEDSEGDNSKDPDKQLAPKFKTYELTLKDVQNILMYWDRKQGVQLPPAGMEEAPHEPDDQRQVPLGGRRGRKDRERERLEKERTEKERLEREKAERERLEKLRALEERSDWEGEGEEDHEGKKEKDLGVPFLDIQTPDFEGLSWKQALESDKLPKGEQILDILGLGASGPPIPPPALFSIVSYPVKRPPLTMTDDLEHFVFVIPPSEDISLDEKKEMEIESDFLATTNTTKAQEEQTSSSKGGKQKMKEKIDQVFEIQKDKRHMALNRKVLSGEPAGTISQLSDTDLDNFNGQHSQEKFTRLNHFRWIVPANGEVTLQVHFSSDEFGNFDQTFNFEILGTCCQYQLYCRGICTYPYICQDPKVVFPQRKMDMKTNEVIFKKYVMSTETYYFGPLLCGKSRDKYKSSLFPGNMETLTILNTSLMVVEASFYFQNDVKANTYFLEPNTMVLKPNEKQILNVWAYPTSVGVFEDSIVCCINDNPEPAIFQLSCQGIRPELELEPRQLHFDRLLLHRQESRVVLLRNVTLLPVAWRITSLEHLGDDFTVSLMQGTIPPEAEYGLHLYFQPTKPVNIKKAIRLEVLDAENLLGVVQIENIMVFAEAYDIALDITFPKGAEGGLDFGIVRVTEEAKQPLQLKNRGKYEIAFSFSVDSVGISTPNINSMISVQPKKGSLTPTEKPTNVQVFFHAKKEVKIEHQPVLRCQIIEPNISEGGEIIASIPIKFSANAVYSKYNITPSSVINFGALICGTRKSTTFTIENQGVTDFKFALYKLTGESPIHQKKAASHVRHARSRESESFYKTGSSRAAKFSDTIQKEVTTTGQARFAHGMFTVYPGFGSIPSGGQQVINVDCVADAMGKCEEFIAIDISGRDPAVHPAGILYTLLAEACLPAFVTENNALIFEEHQICTSANLHHILQTIESGGLFVEDENKFIFCNVLVGRQAKARFKISNVGKITCDVNIVVRPISNKPFARIVDIFEVEPSKMCIASHSHAFATVSFTPQIMQNYQCIFEATLDGLPSTLAKSRGLVFDIAGEGNLPRVTVVRPVLHNQYGNPLLLFKRLLLGHSEKLPLILKNNGVLPAQLHVDLQDELGVFSLKGRPTTAYIYITEENKPHVKAKKAHTASLVVSPGDTAEFDVVFHSQKVGRMRGIIHLSVINNQYEETSIHMVGEGYEDDITLDNIHGLVAPTSQEDISISEFTEIIEDNDMEDLVAAALVDHIQFGDCHIGHSYNASFTVTNHSQVNLIRFEWPVSATIAFSPQMGHLHPGCAKDIVVTMKSDVPINLKNMRIRCKLSRIMFQLPADQVPDWDDRMHTVKWVDVPRNMPGTFTTKRKVIETDPEPAHSVLEENYQELQLQISANVDFASYHCQARDVRFKETLVYQTRVFEFDVINSGRVQLEFSWVSEDTSKAVSFAKPDHQGSAQKDQLSQGTMHTGSTLDSTMDHWAEGSPQPFSVEPSSGIVPVGKIQKFKVKFSPLDIGDFESNLFCQIPNLPPGEQGPVLVAKGRSTLPICHFDLKDSDYISGHQRNPELRGSSGGALDPNTRVIEFTTVGIGGKNLRTFTILNPTNSTYSFCWISEEIESLQNPAAFTCLTEKGFIHPEKKAEIVFQFTPFHLGITESSWTFLIPEHNITVPFLLVGKTTEPLISLNKSHLNFSSLLIGREARETVQIINKEEQGFDFSFQDNSRYSEGFSNSLLVCPMEGWIPPLSRFPIDIFFTPKQEGDVNFNLICNVEKKVHPVTLNVKAEGYTMNVEIKCKDRTGSITLLTPNQTNIINFYEVELNECVQCEFNFINTGKFTFSFQAQLCGSKTLLQYLEFSPIDSTVDVGQSVHATLSFQPLKKCVLTDLELIIKISHGPTFMCNISGCAVSPAIHFSFTSYNFGTCFIYQAGMPPYKQTLVITNKEETPMSIDCLYTNTTHLEVNSRVDVVKPGNTLEIPITFYPRESINYQELIPFEINGLSQQTVEIKGKGTKMKILVLDPANRIVKLGAVLPGQVVKRTVSIMNNSLAQLTFNQSILFTIPELQEPKVLTLAPFHNITLKPKEVCKLEVIFAPKKRVPPFSEEVFMECMGLLRPLFLLSGCCQALEISLDQEHIPFGPVVYQTQATRRILMMNTGDVGARFKWDIKKFEPHFSISPEEGYITSGMEVSFEVTYHPTEVGKESLCKNILCYIQGGSPLSLTLSGVCVGPPAVKEVVNFTCQVRSKHTQTILLSNRTNQTWNLHPIFEGEHWEGPEFITLEAHQQNKPYEITYRPRTMNLENRKHQGTLFFPLPDGTGWLYALHGTSELPKAVANIYREVPCKTPYTELLPITNWLNKPQRFRVIVEILKPEKPDLSITMKGLDYIDVLSGSKKDYKLNFFSHKEGTYAAKVIFRNEVTNEFLYYNVSFRVIPSGIIKTIEMVTPVRQVASASIKLENPLPYSVTFSTECRMPDIALPSQFVVPANSEGTFSFEFQPLKAGETFGRLTLHNTDLGYYQYELYLKATPALPEKPVHFQTVLGSSQIILVKFINYTRQRTEYYCRTDCTDFHAEKLINAAPGGQGGTEASVEVLFEPSHLGETKGILILSSLAGGEYIIPLFGMALPPKPQGPFSIRAGYSIIIPFKNVFYHMVTFSIIVDNPAFTIRAGESVRPKKINNITVSFEGNPSGSKTPITTKLTVSCPPGEGSETGVKWVYYLKGITL.

The interaction with KIF9 stretch occupies residues 363–754 (EFFEECITDP…VLFSSPTPSG (392 aa)). Residues 956–967 (LSKKGRVKKGHA) show a composition bias toward basic residues. Disordered regions lie at residues 956 to 987 (LSKK…SPVF), 1925 to 1951 (LAQE…TSLS), 2155 to 2186 (SKAD…LPPG), 2333 to 2459 (EQER…KFKT), 2482 to 2534 (LPPA…AERE), 2664 to 2684 (TNTT…KQKM), and 3852 to 3874 (KPDH…TGST). Residues 1908–1933 (EIKKSKEEQMRAKYLENLAQENEEED) adopt a coiled-coil conformation. The segment covering 1936–1951 (SSDQGTSNSTKRTSLS) has biased composition (polar residues). Positions 2267-2365 (AQDYAAMKAQ…EDELKRRVKK (99 aa)) form a coiled coil. 5 stretches are compositionally biased toward basic and acidic residues: residues 2333 to 2360 (EQER…DELK), 2393 to 2418 (VDVK…EELN), 2444 to 2453 (DNSKDPDKQL), 2489 to 2498 (EAPHEPDDQR), and 2509 to 2534 (KDRE…AERE). Positions 2504 to 2549 (GRRGRKDRERERLEKERTEKERLEREKAERERLEKLRALEERSDWE) form a coiled coil. Polar residues-rich tracts occupy residues 2664–2679 (TNTT…SSKG) and 3857–3874 (GSAQ…TGST).

Interacts with KIF9.

The protein localises to the cell projection. Its subcellular location is the cilium. It is found in the cytoplasm. The protein resides in the cytoskeleton. It localises to the cilium axoneme. The protein localises to the flagellum. In terms of biological role, required for ciliary motility. This Homo sapiens (Human) protein is Hydrocephalus-inducing protein homolog (HYDIN).